We begin with the raw amino-acid sequence, 521 residues long: Protein DETOXIFICATION 44, chloroplastic (521 aa).

Residues 1 to 31 (MAAVATSFCFSPHRSPSRFGNPNSSIRRTIV) constitute a chloroplast transit peptide. A disordered region spans residues 12 to 73 (PHRSPSRFGN…DHDHKPDPGI (62 aa)). Polar residues-rich tracts occupy residues 18-27 (RFGNPNSSIR) and 42-61 (AVSTSSQRPEKQQNPLTSQN). The next 12 helical transmembrane spans lie at 80 to 100 (IMSIALPAALALAADPITSLV), 103 to 123 (AFVGHIGSAELAAVGVSVSVF), 167 to 187 (VSTSLVLAAGVGIAEAIALSL), 213 to 235 (RLRAYGAPPIVVALAAQGAFRGF), 242 to 262 (LYAVVAGNVLNAVLDPILIFV), 268 to 288 (SGAAAATVISEYLIAFILLWK), 314 to 334 (LLIGRTVALLVPFTLATSLAA), 345 to 365 (QIVLEIWLAVSLLTDALAIAA), 385 to 405 (LFGVLQVGLATGTGLAAVLFI), 423 to 443 (IALSGTLFVAGSQPVNALAFV), 454 to 474 (FGFAAYSMVIVGFISSLFMLV), and 481 to 503 (LAGIWTGLFLFMALRLVAGAWRL).

It belongs to the multi antimicrobial extrusion (MATE) (TC 2.A.66.1) family. In terms of tissue distribution, expressed in shoots.

It is found in the plastid. It localises to the chloroplast membrane. This chain is Protein DETOXIFICATION 44, chloroplastic, found in Arabidopsis thaliana (Mouse-ear cress).